The sequence spans 451 residues: Trigger factor (451 aa).

Positions G163 to P248 constitute a PPIase FKBP-type domain.

It belongs to the FKBP-type PPIase family. Tig subfamily.

The protein resides in the cytoplasm. The enzyme catalyses [protein]-peptidylproline (omega=180) = [protein]-peptidylproline (omega=0). Involved in protein export. Acts as a chaperone by maintaining the newly synthesized protein in an open conformation. Functions as a peptidyl-prolyl cis-trans isomerase. This Leptospira borgpetersenii serovar Hardjo-bovis (strain JB197) protein is Trigger factor.